We begin with the raw amino-acid sequence, 738 residues long: Conserved oligomeric Golgi complex subunit 2 (738 aa).

2 disordered regions span residues 474–504 (IKKP…ETKP) and 668–687 (KQAR…GMSD). Residues 483–500 (KEPSITQGNTEDQGSGPS) show a composition bias toward polar residues.

The protein belongs to the COG2 family. Component of the conserved oligomeric Golgi complex which is composed of eight different subunits and is required for normal Golgi morphology and localization.

The protein localises to the golgi apparatus membrane. In terms of biological role, required for normal Golgi morphology and function. The sequence is that of Conserved oligomeric Golgi complex subunit 2 (COG2) from Homo sapiens (Human).